Here is a 931-residue protein sequence, read N- to C-terminus: Probable zinc protease PqqL (931 aa).

Zn(2+) is bound at residue His80. Glu83 serves as the catalytic Proton acceptor. Zn(2+) contacts are provided by His84 and Glu160.

This sequence belongs to the peptidase M16 family. The cofactor is Zn(2+).

The polypeptide is Probable zinc protease PqqL (pqqL) (Escherichia coli (strain K12)).